Consider the following 62-residue polypeptide: Large ribosomal subunit protein uL30 (62 aa).

It belongs to the universal ribosomal protein uL30 family. Part of the 50S ribosomal subunit.

In Thioalkalivibrio sulfidiphilus (strain HL-EbGR7), this protein is Large ribosomal subunit protein uL30.